The following is a 421-amino-acid chain: UPF0229 protein lpp2857 (421 aa).

A disordered region spans residues 83 to 110 (IAGDRIKRPSGGGAGGAGGNASDSGEGE). Residues 92-101 (SGGGAGGAGG) show a composition bias toward gly residues.

This sequence belongs to the UPF0229 family.

In Legionella pneumophila (strain Paris), this protein is UPF0229 protein lpp2857.